We begin with the raw amino-acid sequence, 112 residues long: Ferredoxin, plant-type (112 aa).

Residues 6 to 97 (YEVFEVLSGQ…DLTIEYFRHV (92 aa)) enclose the 2Fe-2S ferredoxin-type domain. [2Fe-2S] cluster-binding residues include Cys41, Cys46, Cys49, and Cys81.

The protein belongs to the 2Fe2S plant-type ferredoxin family.

It participates in aromatic compound metabolism; catechol degradation. Ferredoxins are iron-sulfur proteins that transfer electrons in a wide variety of metabolic reactions. This Pseudomonas putida (Arthrobacter siderocapsulatus) protein is Ferredoxin, plant-type (xylT).